Reading from the N-terminus, the 180-residue chain is ATP synthase subunit delta (180 aa).

This sequence belongs to the ATPase delta chain family. As to quaternary structure, F-type ATPases have 2 components, F(1) - the catalytic core - and F(0) - the membrane proton channel. F(1) has five subunits: alpha(3), beta(3), gamma(1), delta(1), epsilon(1). F(0) has three main subunits: a(1), b(2) and c(10-14). The alpha and beta chains form an alternating ring which encloses part of the gamma chain. F(1) is attached to F(0) by a central stalk formed by the gamma and epsilon chains, while a peripheral stalk is formed by the delta and b chains.

Its subcellular location is the cell membrane. F(1)F(0) ATP synthase produces ATP from ADP in the presence of a proton or sodium gradient. F-type ATPases consist of two structural domains, F(1) containing the extramembraneous catalytic core and F(0) containing the membrane proton channel, linked together by a central stalk and a peripheral stalk. During catalysis, ATP synthesis in the catalytic domain of F(1) is coupled via a rotary mechanism of the central stalk subunits to proton translocation. In terms of biological role, this protein is part of the stalk that links CF(0) to CF(1). It either transmits conformational changes from CF(0) to CF(1) or is implicated in proton conduction. This chain is ATP synthase subunit delta, found in Bacillus cereus (strain 03BB102).